Reading from the N-terminus, the 165-residue chain is Glycine cleavage system H protein, mitochondrial (165 aa).

Residues 1–34 (MALRMWASSTANALKLSSSSRLHLSPTFSISRCF) constitute a mitochondrion transit peptide. A Lipoyl-binding domain is found at 56–138 (VATIGITDHA…YEDGWMIKIK (83 aa)). At Lys97 the chain carries N6-lipoyllysine.

The protein belongs to the GcvH family. The glycine cleavage system is composed of four proteins: P, T, L and H. (R)-lipoate serves as cofactor.

The protein resides in the mitochondrion. The glycine cleavage system catalyzes the degradation of glycine. The H protein shuttles the methylamine group of glycine from the P protein to the T protein. The polypeptide is Glycine cleavage system H protein, mitochondrial (GDCSH) (Pisum sativum (Garden pea)).